Here is a 329-residue protein sequence, read N- to C-terminus: Transaldolase (329 aa).

K136 acts as the Schiff-base intermediate with substrate in catalysis.

Belongs to the transaldolase family. Type 1 subfamily. In terms of assembly, homodimer.

The protein localises to the cytoplasm. The catalysed reaction is D-sedoheptulose 7-phosphate + D-glyceraldehyde 3-phosphate = D-erythrose 4-phosphate + beta-D-fructose 6-phosphate. The protein operates within carbohydrate degradation; pentose phosphate pathway; D-glyceraldehyde 3-phosphate and beta-D-fructose 6-phosphate from D-ribose 5-phosphate and D-xylulose 5-phosphate (non-oxidative stage): step 2/3. Its function is as follows. Transaldolase is important for the balance of metabolites in the pentose-phosphate pathway. This Methylococcus capsulatus (strain ATCC 33009 / NCIMB 11132 / Bath) protein is Transaldolase.